Reading from the N-terminus, the 465-residue chain is A-type ATP synthase subunit B (465 aa).

This sequence belongs to the ATPase alpha/beta chains family. Has multiple subunits with at least A(3), B(3), C, D, E, F, H, I and proteolipid K(x).

The protein localises to the cell membrane. Its function is as follows. Component of the A-type ATP synthase that produces ATP from ADP in the presence of a proton gradient across the membrane. The B chain is a regulatory subunit. In Pyrococcus horikoshii (strain ATCC 700860 / DSM 12428 / JCM 9974 / NBRC 100139 / OT-3), this protein is A-type ATP synthase subunit B.